We begin with the raw amino-acid sequence, 274 residues long: NADPH-dependent 7-cyano-7-deazaguanine reductase (274 aa).

A substrate-binding site is contributed by 80-82; sequence VES. Residue 82 to 83 participates in NADPH binding; the sequence is SK. Residue Cys181 is the Thioimide intermediate of the active site. Residue Asp188 is the Proton donor of the active site. 220-221 contributes to the substrate binding site; that stretch reads HE. 249–250 is a binding site for NADPH; that stretch reads RG.

Belongs to the GTP cyclohydrolase I family. QueF type 2 subfamily. Homodimer.

The protein resides in the cytoplasm. It catalyses the reaction 7-aminomethyl-7-carbaguanine + 2 NADP(+) = 7-cyano-7-deazaguanine + 2 NADPH + 3 H(+). Its pathway is tRNA modification; tRNA-queuosine biosynthesis. In terms of biological role, catalyzes the NADPH-dependent reduction of 7-cyano-7-deazaguanine (preQ0) to 7-aminomethyl-7-deazaguanine (preQ1). The protein is NADPH-dependent 7-cyano-7-deazaguanine reductase of Paraburkholderia xenovorans (strain LB400).